A 191-amino-acid polypeptide reads, in one-letter code: Hypoxanthine/guanine phosphoribosyltransferase (191 aa).

It belongs to the purine/pyrimidine phosphoribosyltransferase family. Archaeal HPRT subfamily. As to quaternary structure, homodimer.

Its subcellular location is the cytoplasm. The enzyme catalyses IMP + diphosphate = hypoxanthine + 5-phospho-alpha-D-ribose 1-diphosphate. The catalysed reaction is GMP + diphosphate = guanine + 5-phospho-alpha-D-ribose 1-diphosphate. The protein operates within purine metabolism; IMP biosynthesis via salvage pathway; IMP from hypoxanthine: step 1/1. Functionally, catalyzes a salvage reaction resulting in the formation of IMP that is energically less costly than de novo synthesis. This is Hypoxanthine/guanine phosphoribosyltransferase from Methanocella paludicola (strain DSM 17711 / JCM 13418 / NBRC 101707 / SANAE).